Consider the following 461-residue polypeptide: Chromosomal replication initiator protein DnaA (461 aa).

The domain I, interacts with DnaA modulators stretch occupies residues 1–68 (MINAWAQIEH…EKAAASVLGS (68 aa)). Residues 68–118 (SVPTITVVSGEEPAAAPRPVQVPAQKRPAAARTSGAEQMGLPLHYASRSAD) form a domain II region. The segment at 119–336 (SIKWMHSFDE…SCLRNLLLKA (218 aa)) is domain III, AAA+ region. The ATP site is built by glycine 162, glycine 164, lysine 165, and threonine 166. The segment at 337-461 (RLLNQQITMD…VERNGRIIHP (125 aa)) is domain IV, binds dsDNA.

Belongs to the DnaA family. As to quaternary structure, oligomerizes as a right-handed, spiral filament on DNA at oriC.

Its subcellular location is the cytoplasm. Functionally, plays an essential role in the initiation and regulation of chromosomal replication. ATP-DnaA binds to the origin of replication (oriC) to initiate formation of the DNA replication initiation complex once per cell cycle. Binds the DnaA box (a 9 base pair repeat at the origin) and separates the double-stranded (ds)DNA. Forms a right-handed helical filament on oriC DNA; dsDNA binds to the exterior of the filament while single-stranded (ss)DNA is stabiized in the filament's interior. The ATP-DnaA-oriC complex binds and stabilizes one strand of the AT-rich DNA unwinding element (DUE), permitting loading of DNA polymerase. After initiation quickly degrades to an ADP-DnaA complex that is not apt for DNA replication. Binds acidic phospholipids. This chain is Chromosomal replication initiator protein DnaA, found in Oleidesulfovibrio alaskensis (strain ATCC BAA-1058 / DSM 17464 / G20) (Desulfovibrio alaskensis).